A 295-amino-acid chain; its full sequence is Ribosomal protein L11 methyltransferase (295 aa).

Thr150, Gly171, Asp193, and Asn232 together coordinate S-adenosyl-L-methionine.

The protein belongs to the methyltransferase superfamily. PrmA family.

It localises to the cytoplasm. The catalysed reaction is L-lysyl-[protein] + 3 S-adenosyl-L-methionine = N(6),N(6),N(6)-trimethyl-L-lysyl-[protein] + 3 S-adenosyl-L-homocysteine + 3 H(+). Functionally, methylates ribosomal protein L11. In Methylobacillus flagellatus (strain ATCC 51484 / DSM 6875 / VKM B-1610 / KT), this protein is Ribosomal protein L11 methyltransferase.